The following is an 818-amino-acid chain: Exchange factor for Arf-6 (818 aa).

Disordered regions lie at residues 92-123 (AQKL…ESSP), 137-168 (MEST…ENDD), 208-291 (NHHH…GVSN), and 326-383 (RTTP…VGGE). Positions 107 to 119 (IERRGSLARKTSE) are enriched in basic and acidic residues. Over residues 140-149 (TDVEESEEET) the composition is skewed to acidic residues. Basic and acidic residues predominate over residues 154-165 (TDEKENQKKPNE). Polar residues-rich tracts occupy residues 213–223 (YNSSPQISTLS) and 255–269 (MSNN…SPEN). Low complexity predominate over residues 326–347 (RTTPNTAASNSSASASPSLHAT). Positions 356–532 (GVSLRSAESS…KTLFQSIKDN (177 aa)) constitute an SEC7 domain. A compositionally biased stretch (polar residues) spans 361–380 (SAESSNLNQTAVPSTSTNSV). In terms of domain architecture, PH spans 569–681 (VEYYSGFLMR…WCEKINFVAA (113 aa)). Residues 782-799 (TMNIMMTPTRRQQQNQKP) are compositionally biased toward polar residues. Positions 782–818 (TMNIMMTPTRRQQQNQKPVVSEDRLSYTDAVNGAAAH) are disordered.

Interacts (via short N-terminal region) with microtubule-associated proteins tac-1 and zyg-8.

It localises to the cytoplasm. The protein localises to the cell cortex. The protein resides in the cell membrane. Functionally, guanine nucleotide exchange factor for arf-6. Involved in response to injury in mechanosensory neurons. Inhibits axon regrowth via microtubule dynamics, possibly by inducing axonal microtubule catastrophes. Limits microtubule growth near the cellular cortex of early embryonic cells. This Caenorhabditis elegans protein is Exchange factor for Arf-6.